We begin with the raw amino-acid sequence, 2969 residues long: Histone-lysine N-methyltransferase ASH1L (2969 aa).

Disordered regions lie at residues 1 to 70 (MDPR…TDAQ) and 118 to 143 (HPRKALKSGKMTDEKNEHCPSKRDPS). Polar residues predominate over residues 21–31 (KSPSAISTGTL). Residue Ser22 is modified to Phosphoserine. Composition is skewed to basic and acidic residues over residues 33–65 (SKREVELEKNTKEEEDLRKRNRERNIEAGKDDG) and 127–143 (KMTDEKNEHCPSKRDPS). A Glycyl lysine isopeptide (Lys-Gly) (interchain with G-Cter in SUMO2) cross-link involves residue Lys34. Position 375 is an N6-acetyllysine (Lys375). Residue Lys425 forms a Glycyl lysine isopeptide (Lys-Gly) (interchain with G-Cter in SUMO2) linkage. Positions 501–511 (IQQDSFSSSEK) are enriched in polar residues. Disordered stretches follow at residues 501–525 (IQQDSFSSSEKGSYETSKHEKQPPV), 537–583 (ASDV…PNPL), 824–845 (YKPKRGRPKSKEMPQLEGPPKR), 878–966 (KQGL…EMEP), 1100–1128 (SEILPSPICSQSSGTSGGQSPVSSDAGFV), 1151–1231 (MKKA…EHVS), and 1243–1281 (SLKEKHKHKCKRRNHDYLSYDKMKRQKRKRKKKYPQLRN). Residues 512–522 (GSYETSKHEKQ) are compositionally biased toward basic and acidic residues. A compositionally biased stretch (polar residues) spans 554–579 (NLPSPSPTVSVNPLTRSPPETSSQLA). Basic residues predominate over residues 887-897 (PKKRGRPKRQM). Positions 887-899 (PKKRGRPKRQMRS) form a DNA-binding region, a.T hook 1. Over residues 920 to 932 (SKLESESDNHRSS) the composition is skewed to basic and acidic residues. The span at 936–949 (FESEDQLQDPDDLD) shows a compositional bias: acidic residues. 2 stretches are compositionally biased toward low complexity: residues 1100–1123 (SEILPSPICSQSSGTSGGQSPVSS) and 1162–1175 (SPPTLLPNSPSHLS). A phosphoserine mark is found at Ser1162 and Ser1170. Polar residues predominate over residues 1186-1211 (SPISESHSDETIPSDSGIGTDNNSTS). Gln1220 is modified (N5-methylglutamine). Basic residues-rich tracts occupy residues 1246–1256 (EKHKHKCKRRN) and 1266–1277 (KRQKRKRKKKYP). Residues 1347–1359 (KKKRGRPPKMREA) constitute a DNA-binding region (a.T hook 2). 3 disordered regions span residues 1489–1508 (HREHRSSEQPQVSMDTGSSR), 1580–1711 (SESS…ASGD), and 1741–1761 (ASAPPSSSPGRSHSKDRTLGK). Polar residues-rich tracts occupy residues 1496–1508 (EQPQVSMDTGSSR), 1580–1598 (SESSPSLSLGGFTPNSEPA), 1605–1622 (NLFTSAIGSCRVSNPNSS), and 1650–1680 (LPSNERAVQTLAGSQPTSDKPSQRPSESTNC). Over residues 1741–1751 (ASAPPSSSPGR) the composition is skewed to low complexity. The a.T hook 3 DNA-binding region spans 1847–1859 (KRRPGRPRKCPLQ). The segment at 1911–1991 (KKGLKRKGWL…PRPPKKKYQK (81 aa)) is disordered. Positions 2069 to 2288 (PDVPLYKKIR…KCRGIIGGKS (220 aa)) are catalytic domain. The 52-residue stretch at 2091–2142 (YEATTCNCKKPDDDTRKGCVDDCLNRMIFAECSPNTCPCGEQCCNQRIQRHE) folds into the AWS domain. The SET domain maps to 2145–2261 (QCLERFRAEE…AGTELTYDYN (117 aa)). Residues 2269–2285 (KQQLCKCGFEKCRGIIG) enclose the Post-SET domain. Positions 2288–2346 (SQRVNGLTSSKNSQPMATHKKSGRSKEKRKSKHKLKKRRGHLSEEPSENINTPTRLTPQ) are disordered. Over residues 2289–2303 (QRVNGLTSSKNSQPM) the composition is skewed to polar residues. The span at 2305 to 2327 (THKKSGRSKEKRKSKHKLKKRRG) shows a compositional bias: basic residues. N6-acetyllysine is present on residues Lys2317, Lys2319, and Lys2323. Polar residues predominate over residues 2335 to 2346 (ENINTPTRLTPQ). Residues 2444-2550 (RLAQIFKEIC…KAYYNARHEA (107 aa)) form the Bromo domain. The segment at 2585–2631 (VIRCICGLYKDEGLMIQCDKCMVWQHCDCMGVNSDVEHYLCEQCDPR) adopts a PHD-type zinc-finger fold. A BAH domain is found at 2661 to 2798 (LLLRQGDCVY…KSAHLFYKIH (138 aa)). Disordered stretches follow at residues 2825 to 2856 (SPHYVPDNYKRNGGRSSWKSERSKPPLKDLGQ) and 2876 to 2919 (NEIP…RRHN). The span at 2842–2855 (WKSERSKPPLKDLG) shows a compositional bias: basic and acidic residues.

The protein belongs to the class V-like SAM-binding methyltransferase superfamily. Histone-lysine methyltransferase family. SET2 subfamily. Post-translationally, methylated at Gln-1220 by N6AMT1. Widely expressed, with highest level in brain, heart and kidney.

The protein resides in the nucleus. The protein localises to the cell junction. Its subcellular location is the tight junction. It localises to the chromosome. It carries out the reaction L-lysyl(36)-[histone H3] + 3 S-adenosyl-L-methionine = N(6),N(6),N(6)-trimethyl-L-lysyl(36)-[histone H3] + 3 S-adenosyl-L-homocysteine + 3 H(+). The enzyme catalyses L-lysyl(9)-[histone H3] + S-adenosyl-L-methionine = N(6)-methyl-L-lysyl(9)-[histone H3] + S-adenosyl-L-homocysteine + H(+). Its function is as follows. Histone methyltransferase specifically trimethylating 'Lys-36' of histone H3 forming H3K36me3. Also monomethylates 'Lys-9' of histone H3 (H3K9me1) in vitro. The physiological significance of the H3K9me1 activity is unclear. The polypeptide is Histone-lysine N-methyltransferase ASH1L (ASH1L) (Homo sapiens (Human)).